A 185-amino-acid polypeptide reads, in one-letter code: Sulfopyruvate decarboxylase subunit beta (185 aa).

Belongs to the TPP enzyme family. Heterododecamer composed of 6 subunits alpha and 6 subunits beta. Thiamine diphosphate serves as cofactor.

It catalyses the reaction 3-sulfopyruvate + H(+) = sulfoacetaldehyde + CO2. Its pathway is cofactor biosynthesis; coenzyme M biosynthesis; sulfoacetaldehyde from phosphoenolpyruvate and sulfite: step 4/4. Functionally, involved in the biosynthesis of the coenzyme M (2-mercaptoethanesulfonic acid). Catalyzes the decarboxylation of sulfopyruvate to sulfoacetaldehyde. The polypeptide is Sulfopyruvate decarboxylase subunit beta (Methanococcus maripaludis (strain DSM 14266 / JCM 13030 / NBRC 101832 / S2 / LL)).